Reading from the N-terminus, the 437-residue chain is Phosphomethylpyrimidine synthase (437 aa).

Residues N69, M98, Y127, H163, 185–187 (SRG), 226–229 (DALR), and E265 each bind substrate. H269 contacts Zn(2+). A substrate-binding site is contributed by Y292. H333 is a Zn(2+) binding site. The [4Fe-4S] cluster site is built by C409, C412, and C416.

The protein belongs to the ThiC family. [4Fe-4S] cluster is required as a cofactor.

The catalysed reaction is 5-amino-1-(5-phospho-beta-D-ribosyl)imidazole + S-adenosyl-L-methionine = 4-amino-2-methyl-5-(phosphooxymethyl)pyrimidine + CO + 5'-deoxyadenosine + formate + L-methionine + 3 H(+). It functions in the pathway cofactor biosynthesis; thiamine diphosphate biosynthesis. In terms of biological role, catalyzes the synthesis of the hydroxymethylpyrimidine phosphate (HMP-P) moiety of thiamine from aminoimidazole ribotide (AIR) in a radical S-adenosyl-L-methionine (SAM)-dependent reaction. In Alkaliphilus oremlandii (strain OhILAs) (Clostridium oremlandii (strain OhILAs)), this protein is Phosphomethylpyrimidine synthase.